The chain runs to 370 residues: Mitogen-activated protein kinase mpkC (370 aa).

In terms of domain architecture, Protein kinase spans 19-298; sequence YANVRPVGLG…AAESLEHPYL (280 aa). Residues 25 to 33 and K48 contribute to the ATP site; that span reads VGLGAFGLV. Catalysis depends on D140, which acts as the Proton acceptor. Residue T170 is modified to Phosphothreonine. Positions 170–172 match the TXY motif; sequence TGY. Y172 is modified (phosphotyrosine).

It belongs to the protein kinase superfamily. Ser/Thr protein kinase family. MAP kinase subfamily. HOG1 sub-subfamily. Mg(2+) serves as cofactor. Post-translationally, dually phosphorylated on Thr-170 and Tyr-172, which activates the enzyme.

The enzyme catalyses L-seryl-[protein] + ATP = O-phospho-L-seryl-[protein] + ADP + H(+). It catalyses the reaction L-threonyl-[protein] + ATP = O-phospho-L-threonyl-[protein] + ADP + H(+). Its activity is regulated as follows. Activated by tyrosine and threonine phosphorylation. Functionally, mitogen-activated protein kinase required for growth on media where sorbitol or mannitol is the sole carbon source. The protein is Mitogen-activated protein kinase mpkC (mpkC) of Aspergillus terreus (strain NIH 2624 / FGSC A1156).